Consider the following 506-residue polypeptide: Probable cytosol aminopeptidase (506 aa).

Positions 278 and 283 each coordinate Mn(2+). K290 is a catalytic residue. Residues D301, D360, and E362 each coordinate Mn(2+). R364 is an active-site residue.

This sequence belongs to the peptidase M17 family. Requires Mn(2+) as cofactor.

It localises to the cytoplasm. The enzyme catalyses Release of an N-terminal amino acid, Xaa-|-Yaa-, in which Xaa is preferably Leu, but may be other amino acids including Pro although not Arg or Lys, and Yaa may be Pro. Amino acid amides and methyl esters are also readily hydrolyzed, but rates on arylamides are exceedingly low.. The catalysed reaction is Release of an N-terminal amino acid, preferentially leucine, but not glutamic or aspartic acids.. Its function is as follows. Presumably involved in the processing and regular turnover of intracellular proteins. Catalyzes the removal of unsubstituted N-terminal amino acids from various peptides. The sequence is that of Probable cytosol aminopeptidase from Ralstonia nicotianae (strain ATCC BAA-1114 / GMI1000) (Ralstonia solanacearum).